The sequence spans 271 residues: 2-aminophenol 1,6-dioxygenase alpha subunit (271 aa).

It belongs to the LigB/MhpB extradiol dioxygenase family. In terms of assembly, heterotetramer of 2 alpha and 2 beta subunits.

Functionally, component of the 2-aminophenol 1,6-dioxygenase complex that catalyzes the ring fission of 2-aminophenol to produce 2-aminomuconic 6-semialdehyde. AmnA seems to have a role in the stability of the complex. This chain is 2-aminophenol 1,6-dioxygenase alpha subunit (amnA), found in Pseudomonas sp.